Here is a 457-residue protein sequence, read N- to C-terminus: DNA repair protein RadA (457 aa).

The C4-type zinc-finger motif lies at 12 to 29 (CQACGYESAKWMGKCPNC). 97-104 (GDPGIGKS) provides a ligand contact to ATP. A RadA KNRFG motif motif is present at residues 254–258 (KNRFG). Positions 353 to 457 (DAYLKAAGGV…GEALKKALPD (105 aa)) are lon-protease-like.

The protein belongs to the RecA family. RadA subfamily.

Its function is as follows. DNA-dependent ATPase involved in processing of recombination intermediates, plays a role in repairing DNA breaks. Stimulates the branch migration of RecA-mediated strand transfer reactions, allowing the 3' invading strand to extend heteroduplex DNA faster. Binds ssDNA in the presence of ADP but not other nucleotides, has ATPase activity that is stimulated by ssDNA and various branched DNA structures, but inhibited by SSB. Does not have RecA's homology-searching function. The protein is DNA repair protein RadA of Listeria monocytogenes serovar 1/2a (strain ATCC BAA-679 / EGD-e).